Consider the following 139-residue polypeptide: Large ribosomal subunit protein uL16 (139 aa).

The span at M1 to G16 shows a compositional bias: basic residues. Positions M1–T25 are disordered.

Belongs to the universal ribosomal protein uL16 family. In terms of assembly, part of the 50S ribosomal subunit.

Its function is as follows. Binds 23S rRNA and is also seen to make contacts with the A and possibly P site tRNAs. This is Large ribosomal subunit protein uL16 from Leifsonia xyli subsp. xyli (strain CTCB07).